A 397-amino-acid polypeptide reads, in one-letter code: LIM/homeobox protein Lhx3 (397 aa).

2 consecutive LIM zinc-binding domains span residues 31 to 81 (CAGC…CKDD) and 90 to 144 (CAAC…CKAD). The residue at position 63 (threonine 63) is a Phosphothreonine. Serine 71 is subject to Phosphoserine. The segment at residues 157-216 (AKRPRTTITAKQLETLKSAYNTSPKPARHVREQLSSETGLDMRVVQVWFQNRRAKEKRLK) is a DNA-binding region (homeobox). The disordered stretch occupies residues 212 to 397 (EKRLKKDAGR…WLDEVDHAQF (186 aa)). Phosphotyrosine is present on tyrosine 227. Phosphoserine occurs at positions 234 and 238. Residues 316-331 (GVPPSPAAPQSLPGPQ) show a composition bias toward pro residues.

As to quaternary structure, interacts with POU1F1. At neuronal promoters, interacts with LDB1, in motor neurons LDB1 is displaced by ISL1 and a ternary complex is formed in which ISL1 contacts both LHX3 and LDB1; allosteric structural changes in the DNA binding domain of LHX3, induced by the ISL1-LHX3 interaction, may explain differences in sequence specificity of the different complexes. Interacts with LDB2. May interact with CITED2/MRG1.

The protein resides in the nucleus. Functionally, transcription factor. Recognizes and binds to the consensus sequence motif 5'-AATTAATTA-3' in the regulatory elements of target genes, such as glycoprotein hormones alpha chain CGA and visual system homeobox CHX10, positively modulating transcription; transcription can be co-activated by LDB2. Synergistically enhances transcription from the prolactin promoter in cooperation with POU1F1/Pit-1. Required for the establishment of the specialized cells of the pituitary gland and the nervous system. Involved in the development of interneurons and motor neurons in cooperation with LDB1 and ISL1. This Homo sapiens (Human) protein is LIM/homeobox protein Lhx3 (LHX3).